The sequence spans 316 residues: Transaldolase A (316 aa).

The active-site Schiff-base intermediate with substrate is Lys-131.

The protein belongs to the transaldolase family. Type 1 subfamily. In terms of assembly, homodimer.

The protein resides in the cytoplasm. It carries out the reaction D-sedoheptulose 7-phosphate + D-glyceraldehyde 3-phosphate = D-erythrose 4-phosphate + beta-D-fructose 6-phosphate. It participates in carbohydrate degradation; pentose phosphate pathway; D-glyceraldehyde 3-phosphate and beta-D-fructose 6-phosphate from D-ribose 5-phosphate and D-xylulose 5-phosphate (non-oxidative stage): step 2/3. Its function is as follows. Transaldolase is important for the balance of metabolites in the pentose-phosphate pathway. The chain is Transaldolase A from Shigella flexneri.